Reading from the N-terminus, the 145-residue chain is Neutral phospholipase A2 homolog taipoxin beta chain 1 (145 aa).

A signal peptide spans 1–27 (MHPAHLLVLLAVCVSLLGASDIPPLPL). Cystine bridges form between cysteine 38–cysteine 98, cysteine 54–cysteine 144, cysteine 56–cysteine 72, cysteine 71–cysteine 125, cysteine 78–cysteine 118, cysteine 87–cysteine 111, and cysteine 105–cysteine 116.

Belongs to the phospholipase A2 family. Group I subfamily. D49 sub-subfamily. As to quaternary structure, heterotrimer of alpha, beta, and gamma chains; non-covalently linked. Expressed by the venom gland.

The protein localises to the secreted. Functionally, heterotrimer: Snake venom phospholipase A2 (PLA2) heterotrimer that acts as a potent presynaptic neurotoxin by blocking synaptic transmission and synaptic vesicle recycling. May act by binding in a calcium-dependent fashion to neurotonal pentraxin-1 (NPTX1) and neurotonal pentraxin-2 (NPTX2), but not to neuronal pentraxin receptor (NPTXR). Also binds to taipoxin-associated calcium binding protein 49 (RCN2), a protein localized in the lumen of endoplasmic reticulum. Its function is as follows. Monomer (beta chain): Snake venom phospholipase A2 homolog that is neither toxic nor enzymatically active. Does not bind calcium. This is Neutral phospholipase A2 homolog taipoxin beta chain 1 from Oxyuranus scutellatus scutellatus (Australian taipan).